A 1544-amino-acid polypeptide reads, in one-letter code: Rho guanine nucleotide exchange factor 12 (1544 aa).

A disordered region spans residues 1–62; it reads MSGTQSTITD…KTKSSSEESR (62 aa). Position 2 is an N-acetylserine (S2). The span at 28–45 shows a compositional bias: basic and acidic residues; that stretch reads SPTDKKQKVERIASHDFD. Position 41 is a phosphoserine (S41). A PDZ domain is found at 72–151; that stretch reads CVIIQKDDNG…LTVQGRPPGS (80 aa). Residues 194–262 adopt a coiled-coil conformation; the sequence is MGEENNVVHN…LSKATGSAQD (69 aa). The segment at 247–346 is disordered; the sequence is PQLQEQLSKA…SLVGSPSTRI (100 aa). Polar residues-rich tracts occupy residues 249–260 and 293–309; these read LQEQLSKATGSA and DCSS…NADS. At S309 the chain carries Phosphoserine. Basic and acidic residues predominate over residues 313–329; sequence GPKERIYLEENPEKSET. Over residues 330–344 the composition is skewed to polar residues; sequence IQDTDTQSLVGSPST. The residue at position 341 (S341) is a Phosphoserine. The region spanning 367–558 is the RGSL domain; it reads GQCSCFQSIE…LMYMKHLGVK (192 aa). The interval 570–706 is disordered; it reads GRIGFLPKIK…GDTLDGTPRT (137 aa). The span at 582-592 shows a compositional bias: basic and acidic residues; the sequence is MKKDKEGEEKG. A compositionally biased stretch (polar residues) spans 631–640; that stretch reads STPSSVSPEP. S637 carries the phosphoserine modification. Positions 663–676 are enriched in low complexity; it reads ANSMSSVASGASFS. Phosphothreonine is present on T736. The region spanning 787 to 977 is the DH domain; sequence KRQEVINELF…RQILNYVNQA (191 aa). A PH domain is found at 1019–1132; that stretch reads KMIHEGPLVW…WQDLICRMAA (114 aa). The segment covering 1138 to 1149 has biased composition (polar residues); the sequence is STKPIPLPQSTP. Residues 1138–1179 form a disordered region; the sequence is STKPIPLPQSTPGEGDNDEEDPSKLKEEQHGISVTGLQSPDR. Residues S1288, S1327, S1377, S1457, and S1541 each carry the phosphoserine modification.

In terms of assembly, interacts with GNA12 and GNA13, probably through the RGS-like domain. Interacts with RHOA, PLXNB1 and PLXNB2. Interacts through its PDZ domain with IGF1R beta subunit. Interacts with GCSAM. Found in a complex with ARHGEF11 and ARHGEF12; binding to ARHGEF11 and ARHGEF12 enhances CDC42 GEF activity of PLEKHG4B, and PLEKHG4B, in turn, inhibits ARHGEF11- and ARHGEF12-mediated RHOA activation. Ubiquitously expressed. Isoform 2 is found in jejunum and testis.

The protein resides in the cytoplasm. It localises to the membrane. Functionally, may play a role in the regulation of RhoA GTPase by guanine nucleotide-binding alpha-12 (GNA12) and alpha-13 (GNA13). Acts as guanine nucleotide exchange factor (GEF) for RhoA GTPase and may act as GTPase-activating protein (GAP) for GNA12 and GNA13. The polypeptide is Rho guanine nucleotide exchange factor 12 (ARHGEF12) (Homo sapiens (Human)).